The sequence spans 238 residues: Ubiquinone biosynthesis O-methyltransferase (238 aa).

Arginine 36, glycine 56, aspartate 77, and methionine 125 together coordinate S-adenosyl-L-methionine.

It belongs to the methyltransferase superfamily. UbiG/COQ3 family.

It carries out the reaction a 3-demethylubiquinol + S-adenosyl-L-methionine = a ubiquinol + S-adenosyl-L-homocysteine + H(+). The catalysed reaction is a 3-(all-trans-polyprenyl)benzene-1,2-diol + S-adenosyl-L-methionine = a 2-methoxy-6-(all-trans-polyprenyl)phenol + S-adenosyl-L-homocysteine + H(+). It functions in the pathway cofactor biosynthesis; ubiquinone biosynthesis. O-methyltransferase that catalyzes the 2 O-methylation steps in the ubiquinone biosynthetic pathway. This chain is Ubiquinone biosynthesis O-methyltransferase, found in Histophilus somni (strain 2336) (Haemophilus somnus).